The sequence spans 974 residues: MSKETRDAAAEGRPSYKDTLNLLQTGFGMRANAVKREPELQAFWSDNGIDGQLGLQNDGPTFTLHDGPPYANGALHMGHALNKVLKDVINKYQVLKGRRVRYVPGWDCHGLPIELKVLQSMDQEQRKALTPIKLRKKAAAYARKQVDGQMKGFQRWGIWADWEQPYLTLQKEYEAAQIKVFGEMVLKGHIYRGLKPVHWSPSSRTALAEAELEYPDGHTSPSVYVAFPAMEVPTPLRDALKAEGLELPTETDALRQALQVAIWTTTPWTLPANLAVSVNERLDYALVDDGSGRMLVVAADLIESLSTTLERPLKHRATVKGALLAGLIYRHPLLDRTSPVVIGGEYITTESGTGLVHTAPGHGVDDFHTGQKHGLPVLCPVDEAGTLTAEAGPFAGLNVLKDANPGIIEALEQAGALLKQEAYSHRYPYDWRTKKPTIFRATEQWFASVEGFRQDALDAIDQVQWTPASGRNRIEAMVKERGDWCISRQRTWGVPIPVFYHHSNGEVLLNADTLSHIETLIASHGADVWWEKDETDLLPPAYANQADQWRKGTDTMDVWFDSGSSWAAVSSQRESLSYPADLYLEGSDQHRGWFQSSLLTSVAVNGHAPYKRVLTHGFALDEKGRKMSKSLGNVVDPMVIIEGGKNQKQEPPYGADVLRLWVSSVDYSADVPIGAGILRQLADVYRKVRNTSRYLLGNLHDFNPASDAIAVADLPLLDRWMLQRTAEVMHEITEAFESYEFFRFFQLLQNFCVTDLSNFYLDIAKDRLYVSAPTDQRRRSCQTVMALIIERLAGFIAPVLCHMAEDIWQNLPYPVQETSVFQRGWPTIPSDWRNDTLSAPVQQLRDLRAAVNKVLEDCRGRQELGASLEAAVRIDARSPELQAALSWLNDNGDPDVDGLRDWLLVSQLQLGGEPWAEVLSNHEDELALIEVSRARGTKCERCWHYEGDVGQHPDHAHICGRCVGVLERRTHQLV.

Positions 69–79 (PYANGALHMGH) match the 'HIGH' region motif. L-isoleucyl-5'-AMP is bound at residue Glu-585. A 'KMSKS' region motif is present at residues 626–630 (KMSKS). ATP is bound at residue Lys-629. Positions 939, 942, 959, and 962 each coordinate Zn(2+).

This sequence belongs to the class-I aminoacyl-tRNA synthetase family. IleS type 1 subfamily. As to quaternary structure, monomer. Zn(2+) serves as cofactor.

The protein resides in the cytoplasm. It carries out the reaction tRNA(Ile) + L-isoleucine + ATP = L-isoleucyl-tRNA(Ile) + AMP + diphosphate. Its function is as follows. Catalyzes the attachment of isoleucine to tRNA(Ile). As IleRS can inadvertently accommodate and process structurally similar amino acids such as valine, to avoid such errors it has two additional distinct tRNA(Ile)-dependent editing activities. One activity is designated as 'pretransfer' editing and involves the hydrolysis of activated Val-AMP. The other activity is designated 'posttransfer' editing and involves deacylation of mischarged Val-tRNA(Ile). The sequence is that of Isoleucine--tRNA ligase from Parasynechococcus marenigrum (strain WH8102).